The chain runs to 380 residues: Protein Wnt-5a (380 aa).

The first 37 residues, 1 to 37 (MKKPIGILSPGVALGTAGGAMSSKFFLMALATFFSFA), serve as a signal peptide directing secretion. The propeptide occupies 38 to 61 (QVVIEANSWWSLGMNNPVQMSEVY). Residues C104 and C115 are joined by a disulfide bond. N114 and N120 each carry an N-linked (GlcNAc...) asparagine glycan. 10 disulfides stabilise this stretch: C154–C162, C164–C182, C238–C252, C240–C247, C309–C340, C325–C335, C339–C379, C355–C370, C357–C367, and C362–C363. S244 is lipidated: O-palmitoleoyl serine; by PORCN. N-linked (GlcNAc...) asparagine glycans are attached at residues N312 and N326.

It belongs to the Wnt family. In terms of assembly, forms a soluble 1:1 complex with AFM; this prevents oligomerization and is required for prolonged biological activity. The complex with AFM may represent the physiological form in body fluids. Homooligomer; disulfide-linked, leading to inactivation. Interacts with PORCN. Interacts with WLS. Interacts with glypican GCP3. Interacts with PKD1 (via extracellular domain). Interacts with TMEM67. Glycosylation is necessary for secretion but not for activity. Post-translationally, palmitoleoylation is required for efficient binding to frizzled receptors. Depalmitoleoylation leads to Wnt signaling pathway inhibition. In terms of processing, proteolytic processing by TIKI1 and TIKI2 promotes oxidation and formation of large disulfide-bond oligomers, leading to inactivation of WNT5A. In terms of tissue distribution, expressed in a gradient at the caudal end of the embryo during gastrulation and later in the distal-most aspect of several structures that extend from the body such as the limbs and genital tubercle.

The protein localises to the secreted. Its subcellular location is the extracellular space. It is found in the extracellular matrix. In terms of biological role, ligand for members of the frizzled family of seven transmembrane receptors. Can activate or inhibit canonical Wnt signaling, depending on receptor context. In the presence of FZD4, activates beta-catenin signaling. In the presence of ROR2, inhibits the canonical Wnt pathway by promoting beta-catenin degradation through a GSK3-independent pathway which involves down-regulation of beta-catenin-induced reporter gene expression. Suppression of the canonical pathway allows chondrogenesis to occur and inhibits tumor formation. Stimulates cell migration. Decreases proliferation, migration, invasiveness and clonogenicity of carcinoma cells and may act as a tumor suppressor. Mediates motility of melanoma cells. Required during embryogenesis for extension of the primary anterior-posterior axis and for outgrowth of limbs and the genital tubercle. Inhibits type II collagen expression in chondrocytes. This is Protein Wnt-5a (Wnt5a) from Mus musculus (Mouse).